We begin with the raw amino-acid sequence, 66 residues long: Large ribosomal subunit protein bL33c (66 aa).

It belongs to the bacterial ribosomal protein bL33 family.

Its subcellular location is the plastid. The protein localises to the chloroplast. This chain is Large ribosomal subunit protein bL33c, found in Ipomoea purpurea (Common morning glory).